The chain runs to 668 residues: Kinesin-like protein KIF2B (668 aa).

Phosphothreonine; by PLK1 is present on threonine 125. Positions cysteine 149–aspartate 177 form a coiled coil. At serine 204 the chain carries Phosphoserine; by PLK1. The Kinesin motor domain maps to arginine 213 to leucine 543. Glycine 303–threonine 310 serves as a coordination point for ATP. Basic and acidic residues predominate over residues proline 585–proline 604. The interval proline 585–alanine 605 is disordered. The stretch at valine 646–valine 667 forms a coiled coil.

This sequence belongs to the TRAFAC class myosin-kinesin ATPase superfamily. Kinesin family. MCAK/KIF2 subfamily. Post-translationally, phosphorylation at Thr-125 by PLK1 is required for activity in the correction of kinetochore-microtubules attachment errors, while phosphorylation at Ser-204 also by PLK1 is required for the kinetochore localization and activity in prometaphase.

The protein resides in the cytoplasm. Its subcellular location is the cytoskeleton. The protein localises to the microtubule organizing center. It localises to the centrosome. It is found in the spindle. The protein resides in the chromosome. Its subcellular location is the centromere. The protein localises to the kinetochore. Its function is as follows. Plus end-directed microtubule-dependent motor required for spindle assembly and chromosome movement during mitosis. Has microtubule depolymerization activity. Plays a role in chromosome congression. The polypeptide is Kinesin-like protein KIF2B (Kif2b) (Mus musculus (Mouse)).